We begin with the raw amino-acid sequence, 221 residues long: Charged multivesicular body protein 3 (221 aa).

Residue G2 is the site of N-myristoyl glycine attachment. Residues 22 to 54 (KIRKEMRVIDRQIRDIQREEEKVKRSIKDAAKK) adopt a coiled-coil conformation. 2 important for autoinhibitory function regions span residues 59 to 64 (VCIILA) and 168 to 169 (IL). A coiled-coil region spans residues 144-221 (LEDTLEGMDD…MQSRLAALRS (78 aa)). The segment at 181–221 (PSKVTDLPDPVAIGATAAPEEESEEEEEIEEMQSRLAALRS) is disordered. The segment covering 199–211 (PEEESEEEEEIEE) has biased composition (acidic residues). An MIT-interacting motif motif is present at residues 200–210 (EEESEEEEEIE). Interaction with STAMBP regions lie at residues 202 to 206 (ESEEE) and 220 to 221 (RS).

The protein belongs to the SNF7 family. As to quaternary structure, probable core component of the endosomal sorting required for transport complex III (ESCRT-III). ESCRT-III components are thought to multimerize to form a flat lattice on the perimeter membrane of the endosome. Several assembly forms of ESCRT-III may exist that interact and act sequentially.

Its subcellular location is the cytoplasm. The protein resides in the cytosol. It is found in the membrane. The protein localises to the endosome. It localises to the late endosome membrane. In terms of biological role, probable core component of the endosomal sorting required for transport complex III (ESCRT-III) which is involved in multivesicular bodies (MVBs) formation and sorting of endosomal cargo proteins into MVBs. MVBs contain intraluminal vesicles (ILVs) that are generated by invagination and scission from the limiting membrane of the endosome and mostly are delivered to lysosomes enabling degradation of membrane proteins, such as stimulated growth factor receptors, lysosomal enzymes and lipids. Involved in late stages of cytokinesis. Plays a role in endosomal sorting/trafficking of EGF receptor. This Danio rerio (Zebrafish) protein is Charged multivesicular body protein 3 (chmp3).